Reading from the N-terminus, the 164-residue chain is Thiol peroxidase (164 aa).

The Thioredoxin domain maps to 18–163 (VKTGETAPEF…FESALEAYRN (146 aa)). Cysteine 60 serves as the catalytic Cysteine sulfenic acid (-SOH) intermediate. An intrachain disulfide couples cysteine 60 to cysteine 93.

It belongs to the peroxiredoxin family. Tpx subfamily. As to quaternary structure, homodimer.

The catalysed reaction is a hydroperoxide + [thioredoxin]-dithiol = an alcohol + [thioredoxin]-disulfide + H2O. Its function is as follows. Thiol-specific peroxidase that catalyzes the reduction of hydrogen peroxide and organic hydroperoxides to water and alcohols, respectively. Plays a role in cell protection against oxidative stress by detoxifying peroxides. This is Thiol peroxidase from Staphylococcus saprophyticus subsp. saprophyticus (strain ATCC 15305 / DSM 20229 / NCIMB 8711 / NCTC 7292 / S-41).